Consider the following 641-residue polypeptide: MESSRTAATSTNGTEKSRRRNTDYLQIDPSSTFINNTGRGFAEELPENFLDTISPHPITPSASTSSATSATEEPATSSAPQLASLAPMSMSSEQPSSSFSSASLLSSSYETIKNEPEFSGSTAGLLSPLHVDSRRRESHDFNTSPYIKEEEDLDGSHLLMGGIRPDTPTNDRSTDLGSISSLLNEDHHTNTIGQSPSPRSTFGSDPTPMIQRQLIKNEDGVSPGSMGFSKNHQGYQKPRNGDRMEYEKAPYQRNSRKQKKPLGLLNQALSSVISTPTISSSNIPTPPSAHIAQPRRIYSTQDSNDPLNAEIGDDIYIDTKDLCKRIAFELKNHSIPQAIFAERILCRSQGTLSDLLRNPKPWNKLKSGRETFRRMYNWVAQPLATRLAILDMKTEDVNRASGMSPPTPAQNVRTHRRSTSDHDGPVSKRPRLVFTDIQKRTLQAIFKETQRPSREMQQTIAEHLRLDLSTVANFFMNARRRSRLGGNIDEPTPFQQVKNISPPPVGDTSDALLNGDDHVPLLNTVMAEMYKEGAIATSNHSAEQREMIERGFGVSIPGPSHSGELLNGDSHEDDEELDELNDSELAYEEDVEIGDEEEEDEEQANGDILPTPKVEELEEKTVIKEEAPDDGEYGATKLAAN.

Composition is skewed to polar residues over residues 1 to 14 (MESS…TNGT) and 28 to 38 (DPSSTFINNTG). Disordered stretches follow at residues 1-79 (MESS…TSSA) and 129-244 (LHVD…GDRM). Residues 52–79 (TISPHPITPSASTSSATSATEEPATSSA) are compositionally biased toward low complexity. The span at 131 to 140 (VDSRRRESHD) shows a compositional bias: basic and acidic residues. Composition is skewed to polar residues over residues 167 to 183 (TPTN…SSLL) and 190 to 204 (NTIG…TFGS). Positions 308 to 394 (NAEIGDDIYI…TRLAILDMKT (87 aa)) form a DNA-binding region, CUT. Disordered regions lie at residues 398 to 428 (NRAS…PVSK), 485 to 508 (GGNI…VGDT), and 552 to 641 (FGVS…LAAN). The segment at residues 427 to 486 (SKRPRLVFTDIQKRTLQAIFKETQRPSREMQQTIAEHLRLDLSTVANFFMNARRRSRLGG) is a DNA-binding region (homeobox). The segment covering 571 to 604 (HEDDEELDELNDSELAYEEDVEIGDEEEEDEEQA) has biased composition (acidic residues). Positions 613–626 (KVEELEEKTVIKEE) are enriched in basic and acidic residues.

This sequence belongs to the CUT homeobox family. Expressed in the embryo. After gastrulation, expressed in almost all cells. During larval and adult stages, expressed in the dorsal and ventral nerve cord, head and tail neurons, pharynx, gut and head.

It is found in the nucleus. In terms of biological role, probable DNA-binding regulatory protein involved in cell-fate specification. This Caenorhabditis elegans protein is Homeobox protein ceh-38 (ceh-38).